A 520-amino-acid polypeptide reads, in one-letter code: Cation efflux system protein CzcB (520 aa).

The tract at residues 28 to 85 (SGRSAPEEQGGHSESKGHGDTEHHGKQAAEADHKDDKSHGDGEHHEVKKGPNGGALFS) is disordered. Residues 32-76 (APEEQGGHSESKGHGDTEHHGKQAAEADHKDDKSHGDGEHHEVKK) show a composition bias toward basic and acidic residues.

This sequence belongs to the membrane fusion protein (MFP) (TC 8.A.1) family.

Its function is as follows. CzcA and CzcB together would act in zinc efflux nearly as effectively as the complete czc efflux system (CzcABC). The CzcB protein is thought to funnel zinc cations to the CzcA transport protein. The chain is Cation efflux system protein CzcB (czcB) from Alcaligenes sp. (strain CT14).